Reading from the N-terminus, the 584-residue chain is MGGLEKKKYERGSATNYITRNKARKKLQLSLPDFRRLCILKGIYPHEPKHKKKVNKGSTAARTFYLIKDIKFLLHEPIVNKFREYKVFVRKLRKAYGKSEWNAVERLKDNKPCYKLDHIVKERYPTFIDALRDLDDALSMCFLFSTFPRTGKCHVQTIQLCRRLTVEFLHYVITARALRKVFLSIKGIYYQAEVLGQPIVWIAPYAFSHDHPTDVDYRVMATFTEFYTTLLGFVNFRLYQSLNLHYPPKLEGQAQAETKISEDTYALDSESSMEKLAALSASLARVVVPAIEEAEADEFPTDGEVTAQEEDRKKELEAQEKHKKLFEGLKFFLNREVPREALAFIIRSFGGDVSWDKSLCIGATYDVTDSCITHQIVDRPGQQTPIIGRYYVQPQWVFDCVNARLLLPVAEYFPGMQLPPHLSPFVSEKEGDYIPPEKLKLLALQRGEDPGHLEEEEEEDEDDDNEGDVAAENEEEDVEVESEEEEEEEVHLSALEQHRLEEKKPQVMAGTVKLEDKQRLAQEEESEAKRLAIMMMKKREKYLYQKIMFGKRRKIREANKLAEKRKAHDDAVRSEKKAKRTRPV.

Residues 1–54 (MGGLEKKKYERGSATNYITRNKARKKLQLSLPDFRRLCILKGIYPHEPKHKKKV) are required for 28S ribosomal RNA processing. Positions 1-257 (MGGLEKKKYE…PKLEGQAQAE (257 aa)) are sufficient for nucleolar localization. Lysine 98 carries the N6-acetyllysine modification. Positions 312–414 (RKKELEAQEK…LLLPVAEYFP (103 aa)) are sufficient for interaction with MAP1B. Residues 321 to 414 (KHKKLFEGLK…LLLPVAEYFP (94 aa)) form the BRCT domain. The tract at residues 449 to 510 (DPGHLEEEEE…EEKKPQVMAG (62 aa)) is disordered. Acidic residues predominate over residues 454–489 (EEEEEEDEDDDNEGDVAAENEEEDVEVESEEEEEEE). Over residues 496 to 505 (EQHRLEEKKP) the composition is skewed to basic and acidic residues. A Glycyl lysine isopeptide (Lys-Gly) (interchain with G-Cter in SUMO1); alternate cross-link involves residue lysine 513. Residue lysine 513 forms a Glycyl lysine isopeptide (Lys-Gly) (interchain with G-Cter in SUMO2); alternate linkage. The required for 28S ribosomal RNA processing stretch occupies residues 535–584 (MMKKREKYLYQKIMFGKRRKIREANKLAEKRKAHDDAVRSEKKAKRTRPV). The span at 560–575 (KLAEKRKAHDDAVRSE) shows a compositional bias: basic and acidic residues. The tract at residues 560-584 (KLAEKRKAHDDAVRSEKKAKRTRPV) is disordered.

This sequence belongs to the pescadillo family. As to quaternary structure, component of the PeBoW complex, composed of BOP1, PES1 and WDR12. The complex is held together by BOP1, which interacts with PES1 via its N-terminal domain and with WDR12 via a high-affinity interaction between the seven-bladed beta-propeller domains of the 2 proteins. The PeBoW complex associates with the 66S pre-ribosome. The PeBoW complex also associates with DDX27, PES1 interacts directly with DDX27. Interacts with IRS1 and UBTF. May interact with MAP1B. Post-translationally, sumoylated. In terms of tissue distribution, ubiquitous. Highest levels appear to be found in tissues that contain a population of proliferating cells, such as ovary and testis. Also appears to be highly expressed in kidney and liver. In the brain expression is restricted to neural progenitor cells and postmitotic neurons. Highly expressed in malignant astrocytes.

It localises to the nucleus. Its subcellular location is the nucleolus. The protein resides in the nucleoplasm. It is found in the chromosome. Component of the PeBoW complex, which is required for maturation of 28S and 5.8S ribosomal RNAs and formation of the 60S ribosome. The protein is Pescadillo homolog (Pes1) of Mus musculus (Mouse).